A 270-amino-acid polypeptide reads, in one-letter code: Sugar phosphatase YidA (270 aa).

Asp-9 serves as the catalytic Nucleophile. Mg(2+) is bound at residue Asp-9. Met-10 lines the phosphate pocket. Asp-11 lines the Mg(2+) pocket. Residues Thr-43 to Gly-44 and Lys-197 each bind phosphate. Asp-220 is a Mg(2+) binding site. Asn-223 is a phosphate binding site.

The protein belongs to the HAD-like hydrolase superfamily. Cof family. As to quaternary structure, homodimer. Requires Mg(2+) as cofactor.

The enzyme catalyses sugar phosphate + H2O = sugar + phosphate.. In terms of biological role, catalyzes the dephosphorylation of different sugar phosphates. The chain is Sugar phosphatase YidA (yidA) from Escherichia coli O6:H1 (strain CFT073 / ATCC 700928 / UPEC).